The sequence spans 367 residues: Damage-control phosphatase At2g17340 (367 aa).

Methionine 1 is modified (N-acetylmethionine). Mn(2+)-binding residues include aspartate 220, asparagine 221, and aspartate 256. The Subfamily II EGMGR motif motif lies at 318 to 322; it reads EGMGR.

Belongs to the damage-control phosphatase family. Phosphopantetheine phosphatase II subfamily. In terms of assembly, multimer. The cofactor is Mn(2+). Requires Ni(2+) as cofactor.

With respect to regulation, activity is strongly promoted by Co(2+), Ni(2+), Mg(2+), Cu(2+) and Mn(2+). Activity is inhibited by EDTA. Metal-dependent phosphatase with probable damage-control functions. Shows phosphatase activity against several substrates, including sugar phosphates and p-nitrophenyl phosphate(pNPP). Prefers sugar phosphate substrates, including the extremely potent glycating agents ribose-5-phosphate and erythrose-4-phosphate. The sequence is that of Damage-control phosphatase At2g17340 from Arabidopsis thaliana (Mouse-ear cress).